The sequence spans 629 residues: MNLCSSGATASTTSLSSTGQRNGGTSEGGGEGAGGGGGSGGGGGNSSNDGPSEAIHCFGSNGGGGGPEEVFHTSHSHSTANGGGGGGSSNGHSQQHNENNATMPPETRPKMVTVKHPESNKPKPTTKKSKPIQADQDVIKALQRCRDEGIKRLDLSKSSITVIPSTVKECVHLTELYLYSNKIGQLPAEIGCLVNLRNLALNENSLTSLPESLQNCKQLKVLDLRHNKLAEIPPVIYRLRTLTTLYLRFNRITAVADNLRQLVNLTMLSLRENKIRELGSAIGALVNLTTLDVSHNHLEHLPEDIGNCVNLSALDLQHNELLDIPDSIGNLKSLVRLGLRYNRLSSVPATLKNCKSMDEFNVEGNGMTQLPDGMLASLSGLTTITLSRNQFTSYPTGGPAQFTNVYSINLEHNRIDKIPYGIFSRAKGLTKLNMKENMLTALPLDIGTWVNMVELNLATNALQKLPDDIMNLQNLEILILSNNMLKKIPNTIGNMRKLRILDLEENRIEVLPHEIGLLHELQRLILQTNQITMLPRSIGHLSNLTHLSVSENNLQFLPEEIGSLEGLENLYINQNPGLEKLPFELALCQNLKYLNIDKCPLSTIPPEIQAGGPSLVLQWLKMHSPYRQM.

The span at 1–19 (MNLCSSGATASTTSLSSTG) shows a compositional bias: low complexity. Residues 1 to 133 (MNLCSSGATA…PTTKKSKPIQ (133 aa)) form a disordered region. A compositionally biased stretch (gly residues) spans 21-45 (RNGGTSEGGGEGAGGGGGSGGGGGN). 20 LRR repeats span residues 149–170 (GIKRLDLSKSSITVIPSTVKEC), 172–193 (HLTELYLYSNKIGQLPAEIGCL), 195–217 (NLRNLALNENSLTSLPESLQNCK), 218–239 (QLKVLDLRHNKLAEIPPVIYRL), 241–262 (TLTTLYLRFNRITAVADNLRQL), 264–285 (NLTMLSLRENKIRELGSAIGAL), 287–308 (NLTTLDVSHNHLEHLPEDIGNC), 310–331 (NLSALDLQHNELLDIPDSIGNL), 333–355 (SLVRLGLRYNRLSSVPATLKNCK), 356–377 (SMDEFNVEGNGMTQLPDGMLAS), 380–401 (GLTTITLSRNQFTSYPTGGPAQ), 404–425 (NVYSINLEHNRIDKIPYGIFSR), 428–449 (GLTKLNMKENMLTALPLDIGTW), 451–472 (NMVELNLATNALQKLPDDIMNL), 474–495 (NLEILILSNNMLKKIPNTIGNM), 497–518 (KLRILDLEENRIEVLPHEIGLL), 520–541 (ELQRLILQTNQITMLPRSIGHL), 543–564 (NLTHLSVSENNLQFLPEEIGSL), 566–588 (GLENLYINQNPGLEKLPFELALC), and 590–611 (NLKYLNIDKCPLSTIPPEIQAG).

It belongs to the SHOC2 family.

Functionally, acts as a Ras effector and participates in MAPK pathway activation. Probably acts as a regulatory subunit of protein phosphatase that specifically dephosphorylates Raf kinase and stimulate Raf activity at specialized signaling complexes upon Ras activation. The chain is Leucine-rich repeat protein soc-2 homolog (Sur-8) from Drosophila pseudoobscura pseudoobscura (Fruit fly).